The chain runs to 274 residues: NH(3)-dependent NAD(+) synthetase (274 aa).

An ATP-binding site is contributed by 46–53 (GISGGQDS). A Mg(2+)-binding site is contributed by aspartate 52. Arginine 140 lines the deamido-NAD(+) pocket. Threonine 160 provides a ligand contact to ATP. Glutamate 165 contributes to the Mg(2+) binding site. Lysine 173 and aspartate 180 together coordinate deamido-NAD(+). Residues lysine 189 and threonine 211 each coordinate ATP. Position 260 to 261 (260 to 261 (HK)) interacts with deamido-NAD(+).

The protein belongs to the NAD synthetase family. Homodimer.

It catalyses the reaction deamido-NAD(+) + NH4(+) + ATP = AMP + diphosphate + NAD(+) + H(+). It functions in the pathway cofactor biosynthesis; NAD(+) biosynthesis; NAD(+) from deamido-NAD(+) (ammonia route): step 1/1. Functionally, catalyzes the ATP-dependent amidation of deamido-NAD to form NAD. Uses ammonia as a nitrogen source. The chain is NH(3)-dependent NAD(+) synthetase from Pectobacterium atrosepticum (strain SCRI 1043 / ATCC BAA-672) (Erwinia carotovora subsp. atroseptica).